The chain runs to 445 residues: Na(+)-translocating NADH-quinone reductase subunit A (445 aa).

It belongs to the NqrA family. In terms of assembly, composed of six subunits; NqrA, NqrB, NqrC, NqrD, NqrE and NqrF.

The enzyme catalyses a ubiquinone + n Na(+)(in) + NADH + H(+) = a ubiquinol + n Na(+)(out) + NAD(+). Functionally, NQR complex catalyzes the reduction of ubiquinone-1 to ubiquinol by two successive reactions, coupled with the transport of Na(+) ions from the cytoplasm to the periplasm. NqrA to NqrE are probably involved in the second step, the conversion of ubisemiquinone to ubiquinol. This Pseudomonas aeruginosa (strain ATCC 15692 / DSM 22644 / CIP 104116 / JCM 14847 / LMG 12228 / 1C / PRS 101 / PAO1) protein is Na(+)-translocating NADH-quinone reductase subunit A.